The following is a 213-amino-acid chain: Proteasome subunit beta 1 (213 aa).

Residues 1 to 18 (MVFIAVFNGVFAMSSLPG) constitute a propeptide, removed in mature form; by autocatalysis. Catalysis depends on T19, which acts as the Nucleophile.

It belongs to the peptidase T1B family. As to quaternary structure, the 20S proteasome core is composed of 14 alpha and 14 beta subunits that assemble into four stacked heptameric rings, resulting in a barrel-shaped structure. The two inner rings, each composed of seven catalytic beta subunits, are sandwiched by two outer rings, each composed of seven alpha subunits. The catalytic chamber with the active sites is on the inside of the barrel. Has a gated structure, the ends of the cylinder being occluded by the N-termini of the alpha-subunits. Is capped at one or both ends by the proteasome regulatory ATPase, PAN.

The protein resides in the cytoplasm. It carries out the reaction Cleavage of peptide bonds with very broad specificity.. With respect to regulation, the formation of the proteasomal ATPase PAN-20S proteasome complex, via the docking of the C-termini of PAN into the intersubunit pockets in the alpha-rings, triggers opening of the gate for substrate entry. Interconversion between the open-gate and close-gate conformations leads to a dynamic regulation of the 20S proteasome proteolysis activity. Component of the proteasome core, a large protease complex with broad specificity involved in protein degradation. This is Proteasome subunit beta 1 from Staphylothermus marinus (strain ATCC 43588 / DSM 3639 / JCM 9404 / F1).